Reading from the N-terminus, the 576-residue chain is Arginine--tRNA ligase (576 aa).

A 'HIGH' region motif is present at residues 128-136; it reads PTGPMHIGH.

It belongs to the class-I aminoacyl-tRNA synthetase family. In terms of assembly, monomer.

Its subcellular location is the cytoplasm. It catalyses the reaction tRNA(Arg) + L-arginine + ATP = L-arginyl-tRNA(Arg) + AMP + diphosphate. In Rickettsia conorii (strain ATCC VR-613 / Malish 7), this protein is Arginine--tRNA ligase.